The following is a 328-amino-acid chain: tRNA U34 carboxymethyltransferase (328 aa).

Carboxy-S-adenosyl-L-methionine contacts are provided by residues Lys91, Trp105, Lys110, Gly130, 152-154 (DPS), Met196, Tyr200, and Arg315.

The protein belongs to the class I-like SAM-binding methyltransferase superfamily. CmoB family. As to quaternary structure, homotetramer.

It catalyses the reaction carboxy-S-adenosyl-L-methionine + 5-hydroxyuridine(34) in tRNA = 5-carboxymethoxyuridine(34) in tRNA + S-adenosyl-L-homocysteine + H(+). Functionally, catalyzes carboxymethyl transfer from carboxy-S-adenosyl-L-methionine (Cx-SAM) to 5-hydroxyuridine (ho5U) to form 5-carboxymethoxyuridine (cmo5U) at position 34 in tRNAs. The chain is tRNA U34 carboxymethyltransferase from Psychromonas ingrahamii (strain DSM 17664 / CCUG 51855 / 37).